The primary structure comprises 365 residues: Aminotransferase poxL (365 aa).

Arg-92 contributes to the pyridoxal 5'-phosphate binding site. N6-(pyridoxal phosphate)lysine is present on Lys-193. Glu-229 is a binding site for pyridoxal 5'-phosphate.

This sequence belongs to the class-IV pyridoxal-phosphate-dependent aminotransferase family. Pyridoxal 5'-phosphate is required as a cofactor.

It participates in secondary metabolite biosynthesis. Aminotransferase; part of the gene cluster that mediates the biosynthesis of oxaleimides, cytotoxic compounds containing an unusual disubstituted succinimide moiety. The first step of the pathway is provided by the HR-PKS poxF that serves in a new mode of collaborative biosynthesis with the PKS-NRPS poxE, by providing the olefin containing amino acid substrate via the synthesis of an ACP-bound dec-4-enoate. The cytochrome P450 monooxygenase poxM-catalyzed oxidation at the alpha-position creates the enzyme-bound 2-hydroxydec-4-enoyl-ACP thioester, which may be prone to spontaneous hydrolysis to yield 2-hydroxydec-4-enoic acid due to increased electrophilicity of the carbonyl. 2-hydroxydec-4-enoic acid can then be further oxidized by poxM to yield the alpha-ketoacid 2-oxodec-4-enoicacid, which is reductively aminated by the aminotransferase poxL to yield (S,E)-2-aminodec-4-enoic acid. The Hybrid PKS-NRPS synthetase poxE then performs condensation between the octaketide product of its PKS modules and the amino group of (S,E)-2-aminodec-4-enoic acid which is activated and incorporated by the adenylation domain. The resulting aminoacyl product can be cyclized by the Diels-Alderase PoxQ and reductively released by the reductive (R) domain of poxE to yield an aldehyde intermediate. The released aldehyde is then substrate for a Knoevenagel condensation by the hydrolyase poxO followed by an oxidation at the 5-position of the pyrrolidone ring. The presence of the olefin from the amino acid building block allows for migration of the substituted allyl group to occur. This allylic transposition reaction takes place in a conjugate addition, semipinacol-like fashion to yield a succinimide intermediate. Iterative two-electron oxidations of the C7 methyl of the succinimide intermediate to the carboxylic acid can be catalyzed by one of two remaining cytochrome P450 monooxygenasess poxC or poxD to yield oxaleimide A. Subsequent oxidation yields the maleimide scaffold oxaleimide I. Both oxaleimide A and oxaleimide I can undergo oxidative modifications in the decalin ring to yield the series of products oxaleimides B to H. The sequence is that of Aminotransferase poxL from Penicillium oxalicum.